A 448-amino-acid polypeptide reads, in one-letter code: Trigger factor (448 aa).

Residues 172–257 (GDRVTVDFVG…MKKIEWPHLP (86 aa)) form the PPIase FKBP-type domain.

This sequence belongs to the FKBP-type PPIase family. Tig subfamily.

It localises to the cytoplasm. It carries out the reaction [protein]-peptidylproline (omega=180) = [protein]-peptidylproline (omega=0). Functionally, involved in protein export. Acts as a chaperone by maintaining the newly synthesized protein in an open conformation. Functions as a peptidyl-prolyl cis-trans isomerase. In Burkholderia cenocepacia (strain ATCC BAA-245 / DSM 16553 / LMG 16656 / NCTC 13227 / J2315 / CF5610) (Burkholderia cepacia (strain J2315)), this protein is Trigger factor.